Consider the following 166-residue polypeptide: 3-hydroxyacyl-[acyl-carrier-protein] dehydratase, mitochondrial (166 aa).

The transit peptide at 1 to 17 (MLAKTVFPRGLLVLRSF) directs the protein to the mitochondrion. Residues 34-125 (ETRVFSSEDI…VQAIALRETK (92 aa)) enclose the MaoC-like domain.

As to quaternary structure, homodimer. In terms of tissue distribution, expressed in leaves, roots, siliques and flowers.

The protein localises to the mitochondrion. The catalysed reaction is a (3R)-hydroxyacyl-[ACP] = a (2E)-enoyl-[ACP] + H2O. The enzyme catalyses (3R)-hydroxyhexadecanoyl-[ACP] = (2E)-hexadecenoyl-[ACP] + H2O. It carries out the reaction (3R)-hydroxydecanoyl-[ACP] = (2E)-decenoyl-[ACP] + H2O. The protein operates within lipid metabolism; fatty acid biosynthesis. Functionally, 3-hydroxyl-[acyl-carrier-protein] (3-hydroxyl-ACP) dehydratase required for mitochondrial fatty acid synthesis (mtFAS). MtFAS are essential for photorespiration and plant development, probably by influencing mitochondrial membrane lipid composition and other lipid metabolic pathways. This is 3-hydroxyacyl-[acyl-carrier-protein] dehydratase, mitochondrial from Arabidopsis thaliana (Mouse-ear cress).